The sequence spans 140 residues: Acyl-coenzyme A thioesterase 13 (140 aa).

Met-1 bears the N-acetylmethionine mark. An N6-acetyllysine mark is found at Lys-27, Lys-37, and Lys-43. A CoA-binding site is contributed by Glu-46. 2 residues coordinate substrate: Asn-50 and Gly-81. CoA contacts are provided by residues Ser-83, 90-95 (YMSPAK), and 108-113 (KQGKTL). N6-acetyllysine occurs at positions 108 and 127. His-137 provides a ligand contact to CoA.

It belongs to the thioesterase PaaI family. Homotetramer. Interacts with PCTP. Highly expressed in the kidney and moderately in the heart, liver, brain, small and large intestine. Also expressed in brown adipose tissue.

The protein localises to the cytoplasm. It localises to the cytosol. It is found in the mitochondrion. Its subcellular location is the nucleus. The protein resides in the cytoskeleton. The protein localises to the spindle. The catalysed reaction is a fatty acyl-CoA + H2O = a fatty acid + CoA + H(+). It catalyses the reaction decanoyl-CoA + H2O = decanoate + CoA + H(+). It carries out the reaction octanoyl-CoA + H2O = octanoate + CoA + H(+). The enzyme catalyses butanoyl-CoA + H2O = butanoate + CoA + H(+). The catalysed reaction is hexanoyl-CoA + H2O = hexanoate + CoA + H(+). It catalyses the reaction tetradecanoyl-CoA + H2O = tetradecanoate + CoA + H(+). It carries out the reaction hexadecanoyl-CoA + H2O = hexadecanoate + CoA + H(+). The enzyme catalyses dodecanoyl-CoA + H2O = dodecanoate + CoA + H(+). The catalysed reaction is (9Z)-octadecenoyl-CoA + H2O = (9Z)-octadecenoate + CoA + H(+). Its function is as follows. Catalyzes the hydrolysis of acyl-CoAs into free fatty acids and coenzyme A (CoASH), regulating their respective intracellular levels. Has acyl-CoA thioesterase activity towards medium (C12) and long-chain (C18) fatty acyl-CoA substrates. Can also hydrolyze 3-hydroxyphenylacetyl-CoA and 3,4-dihydroxyphenylacetyl-CoA (in vitro). May play a role in controlling adaptive thermogenesis. This is Acyl-coenzyme A thioesterase 13 from Mus musculus (Mouse).